Consider the following 113-residue polypeptide: Large ribosomal subunit protein bL17 (113 aa).

The protein belongs to the bacterial ribosomal protein bL17 family. In terms of assembly, part of the 50S ribosomal subunit. Contacts protein L32.

This is Large ribosomal subunit protein bL17 from Clostridium beijerinckii (strain ATCC 51743 / NCIMB 8052) (Clostridium acetobutylicum).